We begin with the raw amino-acid sequence, 286 residues long: Undecaprenyl-diphosphatase (286 aa).

A run of 7 helical transmembrane segments spans residues 5–25, 55–75, 92–112, 122–142, 185–205, 229–249, and 264–284; these read WFIIKAIIIGIVEGITEFLPV, IDAFTMIIQLGAILAIVVLYW, SGFKFWLNIAVSAVPAGVLGL, LFNPGSVTAALIVGAIWMIFA, IIGAWIVGLSTVAAAEFSFFL, MHIVGLTVGFIVSFIVALIVV, and FAMYRILLGIVLIILSLFNVI.

Belongs to the UppP family.

It is found in the cell membrane. It catalyses the reaction di-trans,octa-cis-undecaprenyl diphosphate + H2O = di-trans,octa-cis-undecaprenyl phosphate + phosphate + H(+). Functionally, catalyzes the dephosphorylation of undecaprenyl diphosphate (UPP). Confers resistance to bacitracin. This is Undecaprenyl-diphosphatase from Clostridium novyi (strain NT).